The sequence spans 288 residues: Cyclin-dependent kinase 2 homolog (288 aa).

The region spanning 4–284 (YHGLEKIGEG…AKQAIEHPYF (281 aa)) is the Protein kinase domain. Residues 10–18 (IGEGTYGVV) and Lys32 contribute to the ATP site. At Thr14 the chain carries Phosphothreonine. Tyr15 carries the post-translational modification Phosphotyrosine. The active-site Proton acceptor is the Asp125. Thr158 bears the Phosphothreonine mark.

Belongs to the protein kinase superfamily. CMGC Ser/Thr protein kinase family. CDC2/CDKX subfamily. As to quaternary structure, may form a complex composed of at least the catalytic subunit CRK2 and a cyclin. Requires Mg(2+) as cofactor.

The protein localises to the cytoplasm. It catalyses the reaction L-seryl-[protein] + ATP = O-phospho-L-seryl-[protein] + ADP + H(+). The enzyme catalyses L-threonyl-[protein] + ATP = O-phospho-L-threonyl-[protein] + ADP + H(+). The catalysed reaction is [DNA-directed RNA polymerase] + ATP = phospho-[DNA-directed RNA polymerase] + ADP + H(+). Its activity is regulated as follows. Phosphorylation at Thr-14 or Tyr-15 inactivates the enzyme, while phosphorylation at Thr-158 activates it. Serine/threonine-protein kinase. Involved in the control of the cell cycle. Required for entry into S-phase and mitosis. Probable component of the kinase complex that phosphorylates the repetitive C-terminus of RNA polymerase II. This chain is Cyclin-dependent kinase 2 homolog, found in Plasmodium chabaudi chabaudi.